The following is a 453-amino-acid chain: Pup--protein ligase (453 aa).

Mg(2+) is bound at residue glutamate 9. Arginine 53 is a binding site for ATP. Residue tyrosine 55 participates in Mg(2+) binding. The Proton acceptor role is filled by aspartate 57. Residue glutamate 63 participates in Mg(2+) binding. Positions 66 and 420 each coordinate ATP.

It belongs to the Pup ligase/Pup deamidase family. Pup-conjugating enzyme subfamily.

The enzyme catalyses ATP + [prokaryotic ubiquitin-like protein]-L-glutamate + [protein]-L-lysine = ADP + phosphate + N(6)-([prokaryotic ubiquitin-like protein]-gamma-L-glutamyl)-[protein]-L-lysine.. It functions in the pathway protein degradation; proteasomal Pup-dependent pathway. It participates in protein modification; protein pupylation. Functionally, catalyzes the covalent attachment of the prokaryotic ubiquitin-like protein modifier Pup to the proteasomal substrate proteins, thereby targeting them for proteasomal degradation. This tagging system is termed pupylation. The ligation reaction involves the side-chain carboxylate of the C-terminal glutamate of Pup and the side-chain amino group of a substrate lysine. This Streptomyces coelicolor (strain ATCC BAA-471 / A3(2) / M145) protein is Pup--protein ligase.